The following is a 433-amino-acid chain: Protein translocase subunit SecD (433 aa).

A run of 6 helical transmembrane segments spans residues 7–27 (LAFL…GPKI), 257–277 (LIAG…AYRM), 278–298 (AGLI…LTFA), 300–320 (LHVV…GIAV), 354–374 (TIVD…IFGG), and 380–400 (GFAV…VLFA).

This sequence belongs to the SecD/SecF family. SecD subfamily. As to quaternary structure, forms a complex with SecF. Part of the essential Sec protein translocation apparatus which comprises SecA, SecYEG and auxiliary proteins SecDF. Other proteins may also be involved.

The protein resides in the cell membrane. Its function is as follows. Part of the Sec protein translocase complex. Interacts with the SecYEG preprotein conducting channel. SecDF uses the proton motive force (PMF) to complete protein translocation after the ATP-dependent function of SecA. This Alicyclobacillus acidocaldarius subsp. acidocaldarius (strain ATCC 27009 / DSM 446 / BCRC 14685 / JCM 5260 / KCTC 1825 / NBRC 15652 / NCIMB 11725 / NRRL B-14509 / 104-IA) (Bacillus acidocaldarius) protein is Protein translocase subunit SecD.